A 154-amino-acid polypeptide reads, in one-letter code: Small ribosomal subunit protein uS9 (154 aa).

Disordered stretches follow at residues 1–33 (MVPP…SGLG) and 115–154 (PENN…YSKR). The span at 135–154 (KERKKAGLKKARKAPQYSKR) shows a compositional bias: basic residues.

The protein belongs to the universal ribosomal protein uS9 family.

The protein is Small ribosomal subunit protein uS9 of Tropheryma whipplei (strain TW08/27) (Whipple's bacillus).